A 21-amino-acid chain; its full sequence is Tricyclic peptide MS-271 (21 aa).

Positions 1–9 form a cross-link, 3-cysteinyl-aspartic acid (Cys-Asp); it reads CLGVGSCND. Cystine bridges form between Cys1–Cys13 and Cys7–Cys19. Trp21 is modified (D-tryptophan).

In terms of biological role, inhibits chicken myosin light chain kinase with an IC(50) of 8 M. Does not inhibit bovine cAMP-dependent protein kinase or rat protein kinase C. Antibacterial activity against the Gram-positive bacteria B.subtilis, E.faecium and S.aureus. No antibacterial activity against the Gram-negative bacteria E.coli, K.pneumoniae, P.aeruginosa, P.vulgaris, S.sonnei and S.typhosa. No antifungal activity against C.albicans. The chain is Tricyclic peptide MS-271 from Streptomyces sp.